The primary structure comprises 142 residues: Truncated non-functional hemagglutinin-esterase homolog (142 aa).

At Met1 to Tyr117 the chain is on the virion surface side. Asn2 carries an N-linked (GlcNAc...) asparagine; by host glycan. Cys28 and Cys33 are oxidised to a cystine. N-linked (GlcNAc...) asparagine; by host glycosylation is found at Asn46 and Asn67. Cys70 and Cys95 form a disulfide bridge. A helical membrane pass occupies residues Phe118 to Phe138. Over Cys139 to Asn142 the chain is Intravirion.

Belongs to the influenza type C/coronaviruses hemagglutinin-esterase family. As to quaternary structure, homodimer. In terms of processing, N-glycosylated.

Its subcellular location is the virion membrane. The protein localises to the host cell membrane. In Berne virus (BEV), this protein is Truncated non-functional hemagglutinin-esterase homolog (HE).